A 1035-amino-acid chain; its full sequence is Beta-galactosidase (1035 aa).

Residues N109 and D208 each contribute to the substrate site. D208 contacts Na(+). E424, H426, and E469 together coordinate Mg(2+). Substrate is bound by residues E469 and 545–548 (EYAH). Catalysis depends on E469, which acts as the Proton donor. E545 acts as the Nucleophile in catalysis. Mg(2+) is bound at residue N605. The Na(+) site is built by F609 and N612. Substrate contacts are provided by N612 and W1011.

This sequence belongs to the glycosyl hydrolase 2 family. As to quaternary structure, homotetramer. Mg(2+) is required as a cofactor. It depends on Na(+) as a cofactor.

It catalyses the reaction Hydrolysis of terminal non-reducing beta-D-galactose residues in beta-D-galactosides.. This chain is Beta-galactosidase, found in Klebsiella pneumoniae (strain 342).